A 336-amino-acid chain; its full sequence is Ferrochelatase (336 aa).

Fe cation is bound by residues histidine 206 and glutamate 287.

Belongs to the ferrochelatase family.

It localises to the cytoplasm. It carries out the reaction heme b + 2 H(+) = protoporphyrin IX + Fe(2+). It functions in the pathway porphyrin-containing compound metabolism; protoheme biosynthesis; protoheme from protoporphyrin-IX: step 1/1. Functionally, catalyzes the ferrous insertion into protoporphyrin IX. This chain is Ferrochelatase, found in Neisseria meningitidis serogroup B (strain ATCC BAA-335 / MC58).